The primary structure comprises 327 residues: Mitochondrial coenzyme A transporter SLC25A42 (327 aa).

3 Solcar repeats span residues 34–120 (KSVL…YKKL), 132–217 (LTPI…LKKL), and 227–315 (PYTF…TQIL). Transmembrane regions (helical) follow at residues 36–56 (VLNS…AVAP), 92–112 (LWRG…IQFC), 138–158 (LLAG…LDLV), 192–209 (GFTP…ISFF), 233–253 (LLFG…LDVV), and 296–316 (VKGP…QILL).

This sequence belongs to the mitochondrial carrier (TC 2.A.29) family.

It localises to the mitochondrion inner membrane. The enzyme catalyses ADP(out) + CoA(in) = ADP(in) + CoA(out). It carries out the reaction 3'-dephospho-CoA(in) + ADP(out) = 3'-dephospho-CoA(out) + ADP(in). The catalysed reaction is adenosine 3',5'-bisphosphate(in) + ADP(out) = adenosine 3',5'-bisphosphate(out) + ADP(in). It catalyses the reaction AMP(in) + ADP(out) = AMP(out) + ADP(in). The enzyme catalyses dADP(in) + ADP(out) = dADP(out) + ADP(in). It carries out the reaction ADP(in) + ATP(out) = ADP(out) + ATP(in). In terms of biological role, mitochondrial carrier mediating the transport of coenzyme A (CoA) in mitochondria in exchange for intramitochondrial (deoxy)adenine nucleotides and adenosine 3',5'-diphosphate. The sequence is that of Mitochondrial coenzyme A transporter SLC25A42 (slc25a42) from Xenopus laevis (African clawed frog).